A 600-amino-acid chain; its full sequence is Aspartate--tRNA(Asp/Asn) ligase (600 aa).

Residue Glu183 participates in L-aspartate binding. The tract at residues 207 to 210 is aspartate; sequence QLFK. An L-aspartate-binding site is contributed by Arg229. Residues 229-231 and Gln238 each bind ATP; that span reads RDE. An L-aspartate-binding site is contributed by His456. Position 490 (Glu490) interacts with ATP. Arg497 lines the L-aspartate pocket. 542-545 contacts ATP; the sequence is GLDR.

It belongs to the class-II aminoacyl-tRNA synthetase family. Type 1 subfamily. As to quaternary structure, homodimer.

Its subcellular location is the cytoplasm. The enzyme catalyses tRNA(Asx) + L-aspartate + ATP = L-aspartyl-tRNA(Asx) + AMP + diphosphate. In terms of biological role, aspartyl-tRNA synthetase with relaxed tRNA specificity since it is able to aspartylate not only its cognate tRNA(Asp) but also tRNA(Asn). Reaction proceeds in two steps: L-aspartate is first activated by ATP to form Asp-AMP and then transferred to the acceptor end of tRNA(Asp/Asn). The sequence is that of Aspartate--tRNA(Asp/Asn) ligase from Moorella thermoacetica (strain ATCC 39073 / JCM 9320).